The sequence spans 388 residues: 4-hydroxycoumarin synthase 2 (388 aa).

C159 is an active-site residue.

Belongs to the thiolase-like superfamily. Chalcone/stilbene synthases family. Homodimer.

The enzyme catalyses 2-hydroxybenzoyl-CoA + malonyl-CoA = 4-hydroxycoumarin + CO2 + 2 CoA. In terms of biological role, type III polyketide synthase involved preferentially in the biosynthesis of 4-hydroxycoumarin from salicoyl-CoA. Can also use benzoyl-CoA and malonyl-CoA to produce 3,5-dihydroxybiphenyl as a major product and benzoyldiacetic acid lactone as a minor side product. Can also use m-hydroxybenzoyl-CoA as substrate, producing m-hydroxybenzoyl diacetic acid lactone as a derailment product. No activity with p-hydroxybenzoyl-CoA, CoA-linked cinnamic acids or acetyl-CoA. The chain is 4-hydroxycoumarin synthase 2 (BIS3) from Sorbus aucuparia (European mountain ash).